We begin with the raw amino-acid sequence, 51 residues long: Insulin (51 aa).

3 disulfides stabilise this stretch: C7–C37, C19–C50, and C36–C41.

This sequence belongs to the insulin family. As to quaternary structure, heterodimer of a B chain and an A chain linked by two disulfide bonds.

Its subcellular location is the secreted. Functionally, insulin decreases blood glucose concentration. It increases cell permeability to monosaccharides, amino acids and fatty acids. It accelerates glycolysis, the pentose phosphate cycle, and glycogen synthesis in liver. The protein is Insulin (INS) of Meleagris gallopavo (Wild turkey).